A 128-amino-acid polypeptide reads, in one-letter code: UPF0102 protein BCG_2919c (128 aa).

It belongs to the UPF0102 family.

The chain is UPF0102 protein BCG_2919c from Mycobacterium bovis (strain BCG / Pasteur 1173P2).